Here is a 592-residue protein sequence, read N- to C-terminus: Putative amidase ARB_02965 (592 aa).

The first 21 residues, 1–21 (MKGPITFLLQLGAVYTSIASA), serve as a signal peptide directing secretion. N-linked (GlcNAc...) asparagine glycosylation is present at N120. K161 (charge relay system) is an active-site residue. An N-linked (GlcNAc...) asparagine glycan is attached at N217. Catalysis depends on S242, which acts as the Charge relay system. Substrate is bound by residues S242 and 263-266 (TSGS). The active-site Acyl-ester intermediate is the S266. N-linked (GlcNAc...) asparagine glycans are attached at residues N326, N430, and N528.

It belongs to the amidase family.

It localises to the secreted. This is Putative amidase ARB_02965 from Arthroderma benhamiae (strain ATCC MYA-4681 / CBS 112371) (Trichophyton mentagrophytes).